We begin with the raw amino-acid sequence, 85 residues long: VGIVGKYGTRYGASLRKMVKKIEITQHSKYTCTFCGKTKMKRRAVGIWHCGSCMKTVAGGAWTYNTSSAVTVKSAIRRLREMKDQ.

Zn(2+) is bound by residues cysteine 32, cysteine 35, cysteine 50, and cysteine 53. A C4-type zinc finger spans residues 32-53 (CTFCGKTKMKRRAVGIWHCGSC).

Belongs to the eukaryotic ribosomal protein eL43 family. As to quaternary structure, component of the large ribosomal subunit.

The protein resides in the cytoplasm. Component of the large ribosomal subunit. The ribosome is a large ribonucleoprotein complex responsible for the synthesis of proteins in the cell. This is Large ribosomal subunit protein eL43 (rpl37a) from Myxine glutinosa (Atlantic hagfish).